Reading from the N-terminus, the 103-residue chain is Large ribosomal subunit protein bL21 (103 aa).

Belongs to the bacterial ribosomal protein bL21 family. In terms of assembly, part of the 50S ribosomal subunit. Contacts protein L20.

This protein binds to 23S rRNA in the presence of protein L20. This chain is Large ribosomal subunit protein bL21, found in Nitrosospira multiformis (strain ATCC 25196 / NCIMB 11849 / C 71).